Here is a 419-residue protein sequence, read N- to C-terminus: MDKFRVQGPTKLQGEVTISGAKNAALPNLFAALLAEEPVEIQNVPKLKDVDTSMKLLSQLGAKVERNGSVHIDARDVNVFCAPYDLVKTMRASIWALGPLVARFGQGQVSLPGGCTIGARPVDLHISGLEQLGATIKLEEGYVKASVDGRLKGAHIVMDKVSVGATVTIMCAATLAEGTTIIENAAREPEIVDTANFLITLGAKISGQGTDRIVIEGVERLGGGVYRVLPDRIETGTFLVAAAISRGKIICRNAQPDTLDAVLAKLRDAGADIEVGEDWISLDMHGKRPKAVNVRTAPHPAFPTDMQAQFTLLNLVAEGTGFITETVFENRFMHVPELSRMGAHAEIESNTVICHGVEKLSGAQVMATDLRASASLVLAGCIAEGTTVVDRIYHIDRGYERIEDKLRALGANIERVKGE.

22–23 is a phosphoenolpyruvate binding site; the sequence is KN. Arg-91 is a UDP-N-acetyl-alpha-D-glucosamine binding site. The active-site Proton donor is the Cys-115. Cys-115 carries the 2-(S-cysteinyl)pyruvic acid O-phosphothioketal modification. UDP-N-acetyl-alpha-D-glucosamine-binding positions include 120–124, 160–163, Asp-305, and Val-327; these read RPVDL and KVSV.

The protein belongs to the EPSP synthase family. MurA subfamily.

It localises to the cytoplasm. The enzyme catalyses phosphoenolpyruvate + UDP-N-acetyl-alpha-D-glucosamine = UDP-N-acetyl-3-O-(1-carboxyvinyl)-alpha-D-glucosamine + phosphate. Its pathway is cell wall biogenesis; peptidoglycan biosynthesis. Cell wall formation. Adds enolpyruvyl to UDP-N-acetylglucosamine. The polypeptide is UDP-N-acetylglucosamine 1-carboxyvinyltransferase (Escherichia coli (strain K12 / MC4100 / BW2952)).